A 965-amino-acid chain; its full sequence is Glycine dehydrogenase (decarboxylating) 1 (965 aa).

Lys-713 is subject to N6-(pyridoxal phosphate)lysine.

It belongs to the GcvP family. The glycine cleavage system is composed of four proteins: P, T, L and H. It depends on pyridoxal 5'-phosphate as a cofactor.

The enzyme catalyses N(6)-[(R)-lipoyl]-L-lysyl-[glycine-cleavage complex H protein] + glycine + H(+) = N(6)-[(R)-S(8)-aminomethyldihydrolipoyl]-L-lysyl-[glycine-cleavage complex H protein] + CO2. Functionally, the glycine cleavage system catalyzes the degradation of glycine. The P protein binds the alpha-amino group of glycine through its pyridoxal phosphate cofactor; CO(2) is released and the remaining methylamine moiety is then transferred to the lipoamide cofactor of the H protein. This is Glycine dehydrogenase (decarboxylating) 1 from Colwellia psychrerythraea (strain 34H / ATCC BAA-681) (Vibrio psychroerythus).